The primary structure comprises 221 residues: tRNA (guanine-N(7)-)-methyltransferase (221 aa).

The S-adenosyl-L-methionine site is built by Glu-51, Glu-76, Asp-103, and Asp-125. Asp-125 is an active-site residue. Substrate-binding residues include Lys-129 and Asp-161.

The protein belongs to the class I-like SAM-binding methyltransferase superfamily. TrmB family.

It catalyses the reaction guanosine(46) in tRNA + S-adenosyl-L-methionine = N(7)-methylguanosine(46) in tRNA + S-adenosyl-L-homocysteine. Its pathway is tRNA modification; N(7)-methylguanine-tRNA biosynthesis. Catalyzes the formation of N(7)-methylguanine at position 46 (m7G46) in tRNA. The chain is tRNA (guanine-N(7)-)-methyltransferase from Wolbachia pipientis wMel.